The chain runs to 130 residues: Small ribosomal subunit protein uS8 (130 aa).

The protein belongs to the universal ribosomal protein uS8 family. In terms of assembly, part of the 30S ribosomal subunit. Contacts proteins S5 and S12.

Functionally, one of the primary rRNA binding proteins, it binds directly to 16S rRNA central domain where it helps coordinate assembly of the platform of the 30S subunit. The sequence is that of Small ribosomal subunit protein uS8 from Enterobacter sp. (strain 638).